Reading from the N-terminus, the 423-residue chain is Glucose-1-phosphate adenylyltransferase (423 aa).

Alpha-D-glucose 1-phosphate-binding positions include Tyr-107, Gly-172, 187–188, and Ser-205; that span reads EK.

It belongs to the bacterial/plant glucose-1-phosphate adenylyltransferase family. As to quaternary structure, homotetramer.

The catalysed reaction is alpha-D-glucose 1-phosphate + ATP + H(+) = ADP-alpha-D-glucose + diphosphate. It participates in glycan biosynthesis; glycogen biosynthesis. In terms of biological role, involved in the biosynthesis of ADP-glucose, a building block required for the elongation reactions to produce glycogen. Catalyzes the reaction between ATP and alpha-D-glucose 1-phosphate (G1P) to produce pyrophosphate and ADP-Glc. This is Glucose-1-phosphate adenylyltransferase from Cereibacter sphaeroides (strain ATCC 17029 / ATH 2.4.9) (Rhodobacter sphaeroides).